Consider the following 406-residue polypeptide: Phosphopentomutase (406 aa).

Mn(2+) contacts are provided by Asp10, Asp305, His310, Asp346, His347, and His358.

This sequence belongs to the phosphopentomutase family. It depends on Mn(2+) as a cofactor.

Its subcellular location is the cytoplasm. It carries out the reaction 2-deoxy-alpha-D-ribose 1-phosphate = 2-deoxy-D-ribose 5-phosphate. The catalysed reaction is alpha-D-ribose 1-phosphate = D-ribose 5-phosphate. The protein operates within carbohydrate degradation; 2-deoxy-D-ribose 1-phosphate degradation; D-glyceraldehyde 3-phosphate and acetaldehyde from 2-deoxy-alpha-D-ribose 1-phosphate: step 1/2. Functionally, isomerase that catalyzes the conversion of deoxy-ribose 1-phosphate (dRib-1-P) and ribose 1-phosphate (Rib-1-P) to deoxy-ribose 5-phosphate (dRib-5-P) and ribose 5-phosphate (Rib-5-P), respectively. The chain is Phosphopentomutase from Vibrio parahaemolyticus serotype O3:K6 (strain RIMD 2210633).